A 220-amino-acid polypeptide reads, in one-letter code: Pyridoxine/pyridoxamine 5'-phosphate oxidase (220 aa).

FMN contacts are provided by residues 69-74 (RVVLLK), 84-85 (YT), arginine 90, lysine 91, and glutamine 113. Lysine 74 is a substrate binding site. Positions 131, 135, and 139 each coordinate substrate. FMN-binding positions include 148 to 149 (QS) and tryptophan 193. 199–201 (RLH) is a substrate binding site. Residue arginine 203 participates in FMN binding.

It belongs to the pyridoxamine 5'-phosphate oxidase family. In terms of assembly, homodimer. FMN is required as a cofactor.

The enzyme catalyses pyridoxamine 5'-phosphate + O2 + H2O = pyridoxal 5'-phosphate + H2O2 + NH4(+). It catalyses the reaction pyridoxine 5'-phosphate + O2 = pyridoxal 5'-phosphate + H2O2. It participates in cofactor metabolism; pyridoxal 5'-phosphate salvage; pyridoxal 5'-phosphate from pyridoxamine 5'-phosphate: step 1/1. The protein operates within cofactor metabolism; pyridoxal 5'-phosphate salvage; pyridoxal 5'-phosphate from pyridoxine 5'-phosphate: step 1/1. Catalyzes the oxidation of either pyridoxine 5'-phosphate (PNP) or pyridoxamine 5'-phosphate (PMP) into pyridoxal 5'-phosphate (PLP). The sequence is that of Pyridoxine/pyridoxamine 5'-phosphate oxidase from Myxococcus xanthus.